The chain runs to 172 residues: MATMMSMSSFAGAAVVPRSSASSFGARSLPALGRRALVVRAQTEGPSAPPPNKPKASTSIWDEMAFSGPAPERINGRLAMVGFVTALAVEAGRGDGLLSQLGSGTGQAWFAYTVAVLSMASLVPLLQGESAEGRAGAIMNANAELWNGRFAMLGLVALAATEIITGAPFINV.

The transit peptide at 1–38 (MATMMSMSSFAGAAVVPRSSASSFGARSLPALGRRALV) directs the protein to the chloroplast. The next 2 helical transmembrane spans lie at 106-126 (GQAW…VPLL) and 150-170 (FAML…APFI).

The protein belongs to the ELIP/psbS family.

The protein localises to the plastid. Its subcellular location is the chloroplast membrane. Functionally, probably involved in the integration of pigments into the mature pigment-protein complexes. This chain is Low molecular mass early light-inducible protein HV90, chloroplastic, found in Hordeum vulgare (Barley).